The following is a 193-amino-acid chain: MPVWGGGNKCGACGRTVYHAEEVQCDGRSFHRCCFLCMVCRKNLDSTTVAIHDEEIYCKSCYGKKYGPKGYGYGQGAGTLNMDRGERLGIKPESAQPHRPTTNPNTSKFAQKYGGAEKCSRCGDSVYAAEKIIGAGKPWHKNCFRCAKCGKSLESTTLTEKEGEIYCKGCYAKNFGPKGFGYGQGAGALVHAQ.

One can recognise an LIM zinc-binding 1 domain in the interval 10-61 (CGACGRTVYHAEEVQCDGRSFHRCCFLCMVCRKNLDSTTVAIHDEEIYCKSC). The Nuclear localization signal motif lies at 64–69 (KKYGPK). Residue K91 forms a Glycyl lysine isopeptide (Lys-Gly) (interchain with G-Cter in SUMO2) linkage. Residues K112 and K131 each carry the N6-acetyllysine modification. Residues 119–170 (CSRCGDSVYAAEKIIGAGKPWHKNCFRCAKCGKSLESTTLTEKEGEIYCKGC) enclose the LIM zinc-binding 2 domain. Position 137 is an N6-acetyllysine; alternate (K137). K137 is modified (N6-succinyllysine; alternate). Position 161 is an N6-acetyllysine (K161).

In terms of assembly, interacts with KAT14. The LIM domain 1 is necessary and sufficient for this interaction. Interacts with GLRX3.

It localises to the nucleus. Drastically down-regulated in response to PDGF-BB or cell injury, that promote smooth muscle cell proliferation and dedifferentiation. Seems to play a role in the development of the embryonic vascular system. This chain is Cysteine and glycine-rich protein 2 (Csrp2), found in Mus musculus (Mouse).